The primary structure comprises 1218 residues: DNA polymerase subunit gamma-1 (1218 aa).

The disordered stretch occupies residues 31–50 (LDPVPSDGRPPSQMPSSENG). The Exo I signature appears at 179–183 (VFDVE). The Exonuclease activity role is filled by D181. Positions 250–258 (VGHNVSFDR) match the Exo II motif. S289 provides a ligand contact to DNA. The Exo III signature appears at 378-386 (YCARDVWAT). Positions 484-524 (KKVKKPASASKLPIEGAGPFGDPMDQEDPGPPSEEEELQRS) are disordered. The interval 492–553 (ASKLPIEGAG…RPQHLPGHPG (62 aa)) is accessory-interacting determinant. Residues 507–520 (MDQEDPGPPSEEEE) are compositionally biased toward acidic residues. Position 561 (R561) interacts with RNA. S575 serves as a coordination point for DNA. RNA-binding residues include H733, G742, and K747. Residues K785 and T828 each coordinate DNA. The tract at residues 837-843 (TWLTASN) is trigger loop. RNA contacts are provided by S842 and R848. The Pol A signature appears at 866–875 (VGADVDSQEL). A 2'-deoxyribonucleoside 5'-triphosphate is bound by residues D869, V870, S872, E874, R922, K926, and Y930. Mg(2+) contacts are provided by D869 and V870. Residues 922–937 (REHAKIFNYGRIYGAG) carry the Pol B motif. The DNA site is built by T1073 and S1074. The Pol C signature appears at 1113–1120 (HDEVRYLV). D1114 is a binding site for a 2'-deoxyribonucleoside 5'-triphosphate. Position 1114 (D1114) interacts with Mg(2+).

It belongs to the DNA polymerase type-A family. In terms of assembly, heterotrimer composed of a catalytic subunit and a homodimer of accessory subunits (POLG:POLG2). Interacts with TTC3. Interacts with LIG3. It depends on Mg(2+) as a cofactor.

The protein localises to the mitochondrion. It localises to the mitochondrion matrix. Its subcellular location is the mitochondrion nucleoid. It catalyses the reaction DNA(n) + a 2'-deoxyribonucleoside 5'-triphosphate = DNA(n+1) + diphosphate. It carries out the reaction a 3'-end 2'-deoxyribonucleotidyl-deoxyribonucleotide-DNA + H2O = a 3'-end 2'-deoxyribonucleotide-DNA + a 2'-deoxyribonucleoside 5'-phosphate + H(+). The enzyme catalyses a 5'-end 2'-deoxyribose-2'-deoxyribonucleotide-DNA = (2E,4S)-4-hydroxypenten-2-al-5-phosphate + a 5'-end 5'-phospho-2'-deoxyribonucleoside-DNA + H(+). Inhibited by dideoxynucleotides such as antiviral agent zalcitabine. In terms of biological role, catalytic subunit of DNA polymerase gamma solely responsible for replication of mitochondrial DNA (mtDNA). Replicates both heavy and light strands of the circular mtDNA genome using a single-stranded DNA template, RNA primers and the four deoxyribonucleoside triphosphates as substrates. Has 5' -&gt; 3' polymerase activity. Functionally interacts with TWNK and SSBP1 at the replication fork to form a highly processive replisome, where TWNK unwinds the double-stranded DNA template prior to replication and SSBP1 covers the parental heavy strand to enable continuous replication of the entire mitochondrial genome. A single nucleotide incorporation cycle includes binding of the incoming nucleotide at the insertion site, a phosphodiester bond formation reaction that extends the 3'-end of the primer DNA, and translocation of the primer terminus to the post-insertion site. After completing replication of a mtDNA strand, mediates 3' -&gt; 5' exonucleolytic degradation at the nick to enable proper ligation. Highly accurate due to high nucleotide selectivity and 3' -&gt; 5' exonucleolytic proofreading. Proficiently corrects base substitutions, single-base additions and deletions in non-repetitive sequences and short repeats, but displays lower proofreading activity when replicating longer homopolymeric stretches. Exerts exonuclease activity toward single-stranded DNA and double-stranded DNA containing 3'-terminal mispairs. When a misincorporation occurs, transitions from replication to a pro-nucleolytic editing mode and removes the missincorporated nucleoside in the exonuclease active site. Proceeds via an SN2 nucleolytic mechanism in which Asp-198 catalyzes phosphodiester bond hydrolysis and Glu-200 stabilizes the leaving group. As a result the primer strand becomes one nucleotide shorter and is positioned in the post-insertion site, ready to resume DNA synthesis. Exerts 5'-deoxyribose phosphate (dRP) lyase activity and mediates repair-associated mtDNA synthesis (gap filling) in base-excision repair pathway. Catalyzes the release of the 5'-terminal 2-deoxyribose-5-phosphate sugar moiety from incised apurinic/apyrimidinic (AP) sites to produce a substrate for DNA ligase. The dRP lyase reaction does not require divalent metal ions and likely proceeds via a Schiff base intermediate in a beta-elimination reaction mechanism. This Mus musculus (Mouse) protein is DNA polymerase subunit gamma-1.